Here is a 291-residue protein sequence, read N- to C-terminus: 3-methyl-2-oxobutanoate hydroxymethyltransferase (291 aa).

Positions 1–10 are enriched in polar residues; it reads MTQLSAAQTP. Positions 1–20 are disordered; that stretch reads MTQLSAAQTPQPKPADGNRA. The Mg(2+) site is built by D71 and D110. Residues 71 to 72, D110, and K140 each bind 3-methyl-2-oxobutanoate; that span reads DS. E142 contacts Mg(2+). Residue E208 is the Proton acceptor of the active site.

The protein belongs to the PanB family. In terms of assembly, homodecamer; pentamer of dimers. Mg(2+) is required as a cofactor.

The protein localises to the cytoplasm. The enzyme catalyses 3-methyl-2-oxobutanoate + (6R)-5,10-methylene-5,6,7,8-tetrahydrofolate + H2O = 2-dehydropantoate + (6S)-5,6,7,8-tetrahydrofolate. It functions in the pathway cofactor biosynthesis; (R)-pantothenate biosynthesis; (R)-pantoate from 3-methyl-2-oxobutanoate: step 1/2. Functionally, catalyzes the reversible reaction in which hydroxymethyl group from 5,10-methylenetetrahydrofolate is transferred onto alpha-ketoisovalerate to form ketopantoate. The polypeptide is 3-methyl-2-oxobutanoate hydroxymethyltransferase (Streptomyces coelicolor (strain ATCC BAA-471 / A3(2) / M145)).